We begin with the raw amino-acid sequence, 75 residues long: UPF0154 protein MYPU_1460 (75 aa).

The helical transmembrane segment at 8-28 (GLIVGLSILFFIIGGVVAFFV) threads the bilayer.

Belongs to the UPF0154 family.

It is found in the membrane. The polypeptide is UPF0154 protein MYPU_1460 (Mycoplasmopsis pulmonis (strain UAB CTIP) (Mycoplasma pulmonis)).